The primary structure comprises 377 residues: Leukocyte elastase inhibitor (377 aa).

N-acetylmethionine is present on Met-1. An N6-acetyllysine modification is found at Lys-136. A Phosphoserine modification is found at Ser-298. A CARD-binding motif (CBM) region spans residues 349–377; that stretch reads EFVADHPFIFFIRHKPSSNILFLGRLSSP.

Belongs to the serpin family. Ov-serpin subfamily. In terms of assembly, monomer. Interacts (via C-terminus) with CASP1; CASP4 (via CARD domain) and CASP5; these interactions regulate the activity of inflammatory caspases. Interacts with PRTN3. Interacts with GZMH.

It localises to the secreted. The protein localises to the cytoplasm. Its subcellular location is the cytolytic granule. The protein resides in the early endosome. Its function is as follows. Neutrophil serine protease inhibitor that plays an essential role in the regulation of the innate immune response, inflammation and cellular homeostasis. Acts primarily to protect the cell from proteases released in the cytoplasm during stress or infection. These proteases are important in killing microbes but when released from granules, these potent enzymes also destroy host proteins and contribute to mortality. Regulates the activity of the neutrophil proteases elastase, cathepsin G, proteinase-3, chymase, chymotrypsin, and kallikrein-3. Also acts as a potent intracellular inhibitor of GZMH by directly blocking its proteolytic activity. During inflammation, limits the activity of inflammatory caspases CASP1, CASP4 and CASP5 by suppressing their caspase-recruitment domain (CARD) oligomerization and enzymatic activation. When secreted, promotes the proliferation of beta-cells via its protease inhibitory function. This chain is Leukocyte elastase inhibitor (SERPINB1), found in Bos taurus (Bovine).